The primary structure comprises 281 residues: Undecaprenyl-diphosphatase (281 aa).

The next 7 helical transmembrane spans lie at 45 to 65, 86 to 106, 114 to 134, 148 to 168, 196 to 216, 224 to 244, and 256 to 276; these read AFTN…VVVI, WQLW…GLIF, FQNF…FIYV, LVSL…LSLI, FFLG…KFIV, SQLF…LYVI, and FTFF…YGLM.

This sequence belongs to the UppP family.

It localises to the cell membrane. It carries out the reaction di-trans,octa-cis-undecaprenyl diphosphate + H2O = di-trans,octa-cis-undecaprenyl phosphate + phosphate + H(+). In terms of biological role, catalyzes the dephosphorylation of undecaprenyl diphosphate (UPP). Confers resistance to bacitracin. In Streptococcus mutans serotype c (strain ATCC 700610 / UA159), this protein is Undecaprenyl-diphosphatase.